A 316-amino-acid chain; its full sequence is Pantothenate kinase (316 aa).

95–102 (GSVAVGKS) lines the ATP pocket.

The protein belongs to the prokaryotic pantothenate kinase family.

Its subcellular location is the cytoplasm. It catalyses the reaction (R)-pantothenate + ATP = (R)-4'-phosphopantothenate + ADP + H(+). It functions in the pathway cofactor biosynthesis; coenzyme A biosynthesis; CoA from (R)-pantothenate: step 1/5. The polypeptide is Pantothenate kinase (Sodalis glossinidius (strain morsitans)).